The primary structure comprises 887 residues: Putative RNA-binding protein 15B (887 aa).

The tract at residues 1–132 is disordered; the sequence is MKRQSERDSS…EPAGPGSTAA (132 aa). The segment covering 10–20 has biased composition (low complexity); the sequence is SPSGRGSSSSA. Composition is skewed to basic and acidic residues over residues 22-34 and 65-77; these read RPREREREAEAGG and GHRDGRAAGDANH. Gly residues predominate over residues 83–94; that stretch reads RSSGAPGGGGRT. The span at 95–110 shows a compositional bias: low complexity; sequence GKASGDPGAGGASPRA. A phosphoserine mark is found at serine 107 and serine 111. A compositionally biased stretch (pro residues) spans 111–122; that stretch reads SPLPPPPPPPGA. Residues 123–132 are compositionally biased toward low complexity; that stretch reads EPAGPGSTAA. The RRM 1 domain occupies 136 to 216; it reads KTLLISSLSP…RPLKVEPVYL (81 aa). Lysine 210 is covalently cross-linked (Glycyl lysine isopeptide (Lys-Gly) (interchain with G-Cter in SUMO2)). Residues 215–249 are disordered; it reads YLRGGGSSRRSSSSSAAASTPPPGPPAPADPLGYL. Residues 222-233 show a composition bias toward low complexity; that stretch reads SRRSSSSSAAAS. Over residues 234–243 the composition is skewed to pro residues; it reads TPPPGPPAPA. Residues serine 261 and serine 263 each carry the phosphoserine modification. RRM domains follow at residues 333-410 and 414-488; these read RNLF…YGKA and TRLW…FAKA. Threonine 529 carries the post-translational modification Phosphothreonine. A phosphoserine mark is found at serine 549, serine 553, and serine 559. A disordered region spans residues 549–703; sequence SLSKSSDRRN…TLEEPKHETK (155 aa). Basic and acidic residues-rich tracts occupy residues 570 to 613, 623 to 643, and 668 to 700; these read RSGE…ERSR, RGSDRTPERSRKENHSSEGTK, and EAPDSSHGKKTRESERNHRTTEAEPKTLEEPKH. A Nuclear localization signal motif is present at residues 590 to 594; the sequence is RRKRR. Lysine 699 participates in a covalent cross-link: Glycyl lysine isopeptide (Lys-Gly) (interchain with G-Cter in SUMO2). In terms of domain architecture, SPOC spans 708 to 886; the sequence is LSEYAQTLQL…HMVIVIVRDT (179 aa). Positions 719 to 887 are interaction with Epstein-Barr virus BMLF1; sequence WNGLLVLKNS…MVIVIVRDTA (169 aa).

This sequence belongs to the RRM Spen family. Component of the WMM complex, a N6-methyltransferase complex composed of a catalytic subcomplex, named MAC, and of an associated subcomplex, named MACOM. The MAC subcomplex is composed of METTL3 and METTL14. The MACOM subcomplex is composed of WTAP, ZC3H13, CBLL1/HAKAI, VIRMA, and, in some cases of RBM15 (RBM15 or RBM15B). May interact with NCOR2. Interacts with NXF1, the interaction is required to promote mRNA export.

Its subcellular location is the nucleus. It is found in the nucleoplasm. The protein resides in the nucleus speckle. The protein localises to the nucleus envelope. In terms of biological role, RNA-binding protein that acts as a key regulator of N6-methyladenosine (m6A) methylation of RNAs, thereby regulating different processes, such as alternative splicing of mRNAs and X chromosome inactivation mediated by Xist RNA. Associated component of the WMM complex, a complex that mediates N6-methyladenosine (m6A) methylation of RNAs, a modification that plays a role in the efficiency of mRNA splicing and RNA processing. Plays a key role in m6A methylation, possibly by binding target RNAs and recruiting the WMM complex. Involved in random X inactivation mediated by Xist RNA: acts by binding Xist RNA and recruiting the WMM complex, which mediates m6A methylation, leading to target YTHDC1 reader on Xist RNA and promoting transcription repression activity of Xist. Functions in the regulation of alternative or illicit splicing, possibly by regulating m6A methylation. Inhibits pre-mRNA splicing. Also functions as a mRNA export factor by acting as a cofactor for the nuclear export receptor NXF1. This chain is Putative RNA-binding protein 15B (Rbm15b), found in Mus musculus (Mouse).